A 974-amino-acid polypeptide reads, in one-letter code: Cell division control protein 15 (974 aa).

The Protein kinase domain maps to Y25–I272. Residues I31–V39 and K54 contribute to the ATP site. The active-site Proton acceptor is D146. Residues C360 to L702 form a self association domain region. Residues S554–P563 show a composition bias toward low complexity. The tract at residues S554–M592 is disordered. 2 positions are modified to phosphoserine: S561 and S567. Polar residues predominate over residues T564–P579. An auto-inhibitory domain region spans residues T751–T974. T870 is subject to Phosphothreonine. Positions A941–T974 are disordered. Positions T948–D963 are enriched in basic and acidic residues.

The protein belongs to the protein kinase superfamily. Ser/Thr protein kinase family. As to quaternary structure, homodimer. Interacts with TEM1. Phosphorylation by CDK1 reduces the binding to the mother spindle pole body. The extent of phosphorylation gradually increases during cell-cycle progression until some point during late anaphase/telophase when it is rapidly dephosphorylated by CDC14. Phosphorylation inhibits kinase activity and dephosphorylation by CDC14 activates CDC15.

The protein resides in the cytoplasm. It localises to the cytoskeleton. Its subcellular location is the spindle pole. The protein localises to the bud neck. It catalyses the reaction L-seryl-[protein] + ATP = O-phospho-L-seryl-[protein] + ADP + H(+). It carries out the reaction L-threonyl-[protein] + ATP = O-phospho-L-threonyl-[protein] + ADP + H(+). Its activity is regulated as follows. Kinase activity is inhibited by phosphorylation and activated by dephosphorylation by CDC14. Protein kinase of the mitotic exit network (MEN) essential for late nuclear division in the mitotic cycle. Promotes mitotic exit by phosphorylating DBF2 and directly switching on DBF2 kinase activity. Involved in the localization of DBF2 and DBF20 to the neck which is necessary to undergo cytokinesis. Plays a role in segregation of chromosomes during recovery from spindle checkpoint activation. Required for spindle pole localization of CDK1 and inactivation of CDC2 kinase activity at the end of mitosis. Required for spindle disassembly after meiosis II and plays a role in spore morphogenesis. The chain is Cell division control protein 15 (CDC15) from Saccharomyces cerevisiae (strain ATCC 204508 / S288c) (Baker's yeast).